Reading from the N-terminus, the 350-residue chain is Cyclin-O (350 aa).

A disordered region spans residues 1 to 89; sequence MVTPCPTSPS…GSPLPGPAQP (89 aa). The span at 28–42 shows a compositional bias: basic residues; sequence PVKKSRRPRLRRKQP. At Ser-81 the chain carries Phosphoserine.

It belongs to the cyclin family. Present in respiratory cells (at protein level).

It is found in the cytoplasm. The protein localises to the nucleus. Its subcellular location is the nucleolus. In terms of biological role, specifically required for generation of multiciliated cells, possibly by promoting a cell cycle state compatible with centriole amplification and maturation. Acts downstream of MCIDAS to promote mother centriole amplification and maturation in preparation for apical docking. This chain is Cyclin-O, found in Homo sapiens (Human).